A 211-amino-acid polypeptide reads, in one-letter code: uncharacterized protein (211 aa).

Belongs to the A.longa ORF167/ORF288 family.

It is found in the plastid. This is an uncharacterized protein from Euglena longa (Euglenophycean alga).